We begin with the raw amino-acid sequence, 212 residues long: Large ribosomal subunit protein mL48 (212 aa).

A mitochondrion-targeting transit peptide spans 1–28 (MSGTLEKVLCLRNNTIFKQAFSLLRFRT). Residue K199 is modified to N6-succinyllysine.

The protein belongs to the mitochondrion-specific ribosomal protein mL48 family. Component of the mitochondrial large ribosomal subunit (mt-LSU). Mature mammalian 55S mitochondrial ribosomes consist of a small (28S) and a large (39S) subunit. The 28S small subunit contains a 12S ribosomal RNA (12S mt-rRNA) and 30 different proteins. The 39S large subunit contains a 16S rRNA (16S mt-rRNA), a copy of mitochondrial valine transfer RNA (mt-tRNA(Val)), which plays an integral structural role, and 52 different proteins. mL48 is located at the central protuberance. Interacts with OXA1L.

The protein localises to the mitochondrion. The polypeptide is Large ribosomal subunit protein mL48 (MRPL48) (Homo sapiens (Human)).